Consider the following 397-residue polypeptide: Teichoic acid D-alanine hydrolase (397 aa).

A signal peptide spans Met-1–Ala-23.

It localises to the cell membrane. The enzyme catalyses [(4-D-Ala)-(2-GlcNAc)-Rib-ol-P]n-[Gro-P]m-beta-D-ManNAc-(1-&gt;4)-alpha-D-GlcNAc-P-peptidoglycan + n H2O = [(2-GlcNAc)-Rib-ol-P]n-[Gro-P]m-beta-D-ManNAc-(1-&gt;4)-alpha-D-GlcNAc-P-peptidoglycan + n D-alanine.. Catalyzes the liberation of D-alanyl moieties present on wall teichoic acid (WTA) and lipoteichoic acid (LTA). Affects the methicillin resistance level and autolysis in the presence of Triton X-100 as well as the cell wall structure. The protein is Teichoic acid D-alanine hydrolase (fmtA) of Staphylococcus aureus (strain Mu50 / ATCC 700699).